Reading from the N-terminus, the 357-residue chain is Peptide chain release factor 1 (357 aa).

Residue Gln232 is modified to N5-methylglutamine.

This sequence belongs to the prokaryotic/mitochondrial release factor family. Post-translationally, methylated by PrmC. Methylation increases the termination efficiency of RF1.

The protein localises to the cytoplasm. Peptide chain release factor 1 directs the termination of translation in response to the peptide chain termination codons UAG and UAA. The sequence is that of Peptide chain release factor 1 from Nitratidesulfovibrio vulgaris (strain ATCC 29579 / DSM 644 / CCUG 34227 / NCIMB 8303 / VKM B-1760 / Hildenborough) (Desulfovibrio vulgaris).